The following is a 375-amino-acid chain: tRNA-specific 2-thiouridylase MnmA (375 aa).

ATP is bound by residues 9 to 16 (AMSGGVDS) and L35. C105 serves as the catalytic Nucleophile. C105 and C201 form a disulfide bridge. Residue G129 coordinates ATP. The segment at 151 to 153 (KNQ) is interaction with tRNA. The Cysteine persulfide intermediate role is filled by C201. Residues 307 to 308 (RY) form an interaction with tRNA region.

This sequence belongs to the MnmA/TRMU family.

It localises to the cytoplasm. The enzyme catalyses S-sulfanyl-L-cysteinyl-[protein] + uridine(34) in tRNA + AH2 + ATP = 2-thiouridine(34) in tRNA + L-cysteinyl-[protein] + A + AMP + diphosphate + H(+). Catalyzes the 2-thiolation of uridine at the wobble position (U34) of tRNA, leading to the formation of s(2)U34. This Leptospira interrogans serogroup Icterohaemorrhagiae serovar Lai (strain 56601) protein is tRNA-specific 2-thiouridylase MnmA.